Reading from the N-terminus, the 200-residue chain is 3-isopropylmalate dehydratase small subunit (200 aa).

This sequence belongs to the LeuD family. LeuD type 1 subfamily. As to quaternary structure, heterodimer of LeuC and LeuD.

It carries out the reaction (2R,3S)-3-isopropylmalate = (2S)-2-isopropylmalate. It functions in the pathway amino-acid biosynthesis; L-leucine biosynthesis; L-leucine from 3-methyl-2-oxobutanoate: step 2/4. In terms of biological role, catalyzes the isomerization between 2-isopropylmalate and 3-isopropylmalate, via the formation of 2-isopropylmaleate. This chain is 3-isopropylmalate dehydratase small subunit, found in Haemophilus influenzae (strain PittEE).